A 366-amino-acid chain; its full sequence is 5-hydroxytryptamine receptor 1F (366 aa).

The Extracellular segment spans residues 1 to 24 (MDFLNSSDQNLTSEELLHRMPSKI). 2 N-linked (GlcNAc...) asparagine glycosylation sites follow: Asn-5 and Asn-10. The chain crosses the membrane as a helical span at residues 25–49 (LVSLTLSGLALMTTTINSLVIAAII). The Cytoplasmic segment spans residues 50 to 59 (VTRKLHHPAN). The helical transmembrane segment at 60–81 (YLICSLAVTDFLVAVLVMPFSI) threads the bilayer. At 82-96 (VYIVRESWIMGQVLC) the chain is on the extracellular side. Cys-96 and Cys-172 form a disulfide bridge. A helical membrane pass occupies residues 97–119 (DIWLSVDIICCTCSILHLSAIAL). Asp-103 and Cys-107 together coordinate serotonin. The short motif at 120–122 (DRY) is the DRY motif; important for ligand-induced conformation changes element. At 120–139 (DRYRAITDAVEYARKRTPKQ) the chain is on the cytoplasmic side. A helical transmembrane segment spans residues 140 to 159 (AGIMITIVWIISVFISMPPL). The Extracellular portion of the chain corresponds to 160–178 (FWRHQGTSRDDECIIKHDH). The chain crosses the membrane as a helical span at residues 179–202 (IVSTIYSTFGAFYIPLVLILILYY). At 203–291 (KIYKAAKTLY…KISGTRERKA (89 aa)) the chain is on the cytoplasmic side. The helical transmembrane segment at 292–315 (ATTLGLILGAFVICWLPFFVKELV) threads the bilayer. Residues 316 to 327 (VNVCEKCKISEE) lie on the Extracellular side of the membrane. A helical membrane pass occupies residues 328–350 (MANFLAWLGYLNSLINPLIYTIF). The short motif at 343-347 (NPLIY) is the NPxxY motif; important for ligand-induced conformation changes and signaling element. At 351 to 366 (NEDFKKAFQKLVRCQY) the chain is on the cytoplasmic side.

It belongs to the G-protein coupled receptor 1 family.

Its subcellular location is the cell membrane. Its function is as follows. G-protein coupled receptor for 5-hydroxytryptamine (serotonin). Also functions as a receptor for various alkaloids and psychoactive substances. Ligand binding causes a conformation change that triggers signaling via guanine nucleotide-binding proteins (G proteins) and modulates the activity of downstream effectors, such as adenylate cyclase. HTR1F is coupled to G(i)/G(o) G alpha proteins and mediates inhibitory neurotransmission by inhibiting adenylate cyclase activity. In Cavia porcellus (Guinea pig), this protein is 5-hydroxytryptamine receptor 1F (HTR1F).